A 348-amino-acid chain; its full sequence is A-type ATP synthase subunit C (348 aa).

It belongs to the V-ATPase V0D/AC39 subunit family. Has multiple subunits with at least A(3), B(3), C, D, E, F, H, I and proteolipid K(x).

The protein resides in the cell membrane. Its function is as follows. Component of the A-type ATP synthase that produces ATP from ADP in the presence of a proton gradient across the membrane. The protein is A-type ATP synthase subunit C of Halorubrum lacusprofundi (strain ATCC 49239 / DSM 5036 / JCM 8891 / ACAM 34).